A 123-amino-acid chain; its full sequence is Small ribosomal subunit protein bS16 (123 aa).

Residues Ala-87–Glu-123 are disordered. Positions Arg-99–Lys-110 are enriched in basic and acidic residues. Low complexity predominate over residues Ala-111–Glu-123.

Belongs to the bacterial ribosomal protein bS16 family.

The chain is Small ribosomal subunit protein bS16 from Rhizobium etli (strain CIAT 652).